An 83-amino-acid polypeptide reads, in one-letter code: Apolipoprotein C-I, acidic form (83 aa).

A signal peptide spans M1–G26.

This sequence belongs to the apolipoprotein C1 family.

The protein localises to the secreted. In Pan paniscus (Pygmy chimpanzee), this protein is Apolipoprotein C-I, acidic form (APOC1A).